Here is a 435-residue protein sequence, read N- to C-terminus: Bystin (435 aa).

The tract at residues 1–102 (MPKFKAARGA…VPQDGSDDEE (102 aa)) is disordered. R40 bears the Omega-N-methylarginine mark. Basic and acidic residues predominate over residues 71-87 (AEHGSGDRPAVPRERTT). Position 98 is a phosphoserine (S98). Residue T154 is modified to Phosphothreonine. 2 positions are modified to phosphoserine: S165 and S412.

The protein belongs to the bystin family. In terms of assembly, binds trophinin, tastin and cytokeratins.

It is found in the cytoplasm. Its subcellular location is the nucleus. The protein localises to the nucleolus. In terms of biological role, required for processing of 20S pre-rRNA precursor and biogenesis of 40S ribosomal subunits. The sequence is that of Bystin (BYSL) from Bos taurus (Bovine).